Consider the following 330-residue polypeptide: uncharacterized protein (330 aa).

His-257 is a catalytic residue.

The protein belongs to the IUNH family.

This is an uncharacterized protein from Schizosaccharomyces pombe (strain 972 / ATCC 24843) (Fission yeast).